A 523-amino-acid chain; its full sequence is UDP-glucuronosyltransferase 3A1 (523 aa).

The N-terminal stretch at 1-22 (MVGQRVLLLVAFLLSGVLLSEA) is a signal peptide. At 23–483 (AKILTISTLG…YAFQQPWHEQ (461 aa)) the chain is on the extracellular side. N-linked (GlcNAc...) asparagine glycosylation occurs at asparagine 52. A helical membrane pass occupies residues 484 to 504 (YLIDVFVFLLGLTLGTMWLCG). The Cytoplasmic segment spans residues 505 to 523 (KLLGVVARWLRGARKVKKT).

The protein belongs to the UDP-glycosyltransferase family.

The protein resides in the membrane. It carries out the reaction glucuronate acceptor + UDP-alpha-D-glucuronate = acceptor beta-D-glucuronoside + UDP + H(+). UDP-glucuronosyltransferases catalyze phase II biotransformation reactions in which lipophilic substrates are conjugated with glucuronic acid to increase water solubility and enhance excretion. They are of major importance in the conjugation and subsequent elimination of potentially toxic xenobiotics and endogenous compounds. This is UDP-glucuronosyltransferase 3A1 (UGT3A1) from Homo sapiens (Human).